We begin with the raw amino-acid sequence, 869 residues long: Protein translocase subunit SecA (869 aa).

Residues Q88, 106 to 110 (GEGKT), and D509 contribute to the ATP site. Residues 818–840 (QDEGLKFNQREGEDAPAVREKKI) show a composition bias toward basic and acidic residues. The disordered stretch occupies residues 818–869 (QDEGLKFNQREGEDAPAVREKKIPRNSPCPCGSGKKYKDCCGKSGPKKGILA). Zn(2+) contacts are provided by C846, C848, C857, and C858.

It belongs to the SecA family. As to quaternary structure, monomer and homodimer. Part of the essential Sec protein translocation apparatus which comprises SecA, SecYEG and auxiliary proteins SecDF-YajC and YidC. The cofactor is Zn(2+).

It localises to the cell inner membrane. The protein localises to the cytoplasm. It catalyses the reaction ATP + H2O + cellular proteinSide 1 = ADP + phosphate + cellular proteinSide 2.. Part of the Sec protein translocase complex. Interacts with the SecYEG preprotein conducting channel. Has a central role in coupling the hydrolysis of ATP to the transfer of proteins into and across the cell membrane, serving as an ATP-driven molecular motor driving the stepwise translocation of polypeptide chains across the membrane. The chain is Protein translocase subunit SecA from Campylobacter curvus (strain 525.92).